We begin with the raw amino-acid sequence, 257 residues long: Tryptophan synthase alpha chain (257 aa).

Catalysis depends on proton acceptor residues E44 and D55.

This sequence belongs to the TrpA family. As to quaternary structure, tetramer of two alpha and two beta chains.

The enzyme catalyses (1S,2R)-1-C-(indol-3-yl)glycerol 3-phosphate + L-serine = D-glyceraldehyde 3-phosphate + L-tryptophan + H2O. Its pathway is amino-acid biosynthesis; L-tryptophan biosynthesis; L-tryptophan from chorismate: step 5/5. Functionally, the alpha subunit is responsible for the aldol cleavage of indoleglycerol phosphate to indole and glyceraldehyde 3-phosphate. This Chlamydia felis (strain Fe/C-56) (Chlamydophila felis) protein is Tryptophan synthase alpha chain.